An 866-amino-acid chain; its full sequence is MTNDKDRKAPLSLSPKGKLELKKSAETGQVRQSFSHGRSKVVQVEVRKSKKRPATSGDPAAVQNAIRGAAVFDTGLTSEEMQGRRRAVEEAVVRAAEEAERKRLEEIERRRREEEEARLKVEEEARRKAEEEAARAARAAAGDAAETPAEDVAPAAPQVAAAPQAPAPAPTRSGPRPGPDASARPAAEAPRSPTEAPRPGPRRVVEDEDDDAPKKVASRGAVPPKPAPAKRVEPKRRGKLTVTAALEGDERSERGRSVAALRRAKQKEKRKAEMMSPAERVVREVIIPDVINVQELANRMAERGANVIKTLMKMGVMATINQTIDADTAELVVAEFGHASRRVSDSDVELGLGDALPDGTEVLTSRPPVVTVMGHVDHGKTSLLDAMRKTDVAGGEAGGITQHIGAYQVVTKSGQKITFIDTPGHAAFTAMRARGARVTDIVVLVVAANDGIMPQTIEAIRHARAAEVPVVVAINKMDLPDANPEKVRTDLLQHELVVEQLGGDVLNVEVSAKRRLNLDKLEEAILLQSEILDLKANADRACQGVVIEAKVEKGRGSVATILVQKGTLKVGDIFVAGAEWGRVRALVDDHGNRVIAATPAMPVEVLGFQGTPAAGDDFIVVEDENRAREISEYRQRKDRDAQQVRTARGTMEQMFERIQAGEARELPVVIKADVQGSVEALVGTLEKLGNDDVKIRVLHAAVGAINESDVTLAKASDGLIIGFNVRANPQAREMARRDGIDIRYHSIIYAVADEVKALLSGMLEPTFKESFIGYAAIREVFNITKVGKVAGCMVTEGIVKRGAKVRLLRDNVVIHEGSLSQLKRFKDDVREVREGYECGMSFETYNDIQVGDVIECFEMEEVAAVL.

2 disordered regions span residues 1–63 and 92–257; these read MTND…AAVQ and VVRA…RGRS. Positions 26–36 are enriched in polar residues; that stretch reads ETGQVRQSFSH. A compositionally biased stretch (basic and acidic residues) spans 92–135; sequence VVRAAEEAERKRLEEIERRRREEEEARLKVEEEARRKAEEEAAR. 2 stretches are compositionally biased toward low complexity: residues 152-164 and 179-197; these read VAPAAPQVAAAPQ and PDASARPAAEAPRSPTEAP. The tr-type G domain occupies 365-533; the sequence is SRPPVVTVMG…AILLQSEILD (169 aa). The tract at residues 374–381 is G1; that stretch reads GHVDHGKT. 374–381 provides a ligand contact to GTP; it reads GHVDHGKT. Positions 399 to 403 are G2; that stretch reads GITQH. A G3 region spans residues 421–424; the sequence is DTPG. GTP-binding positions include 421–425 and 475–478; these read DTPGH and NKMD. The tract at residues 475 to 478 is G4; sequence NKMD. The segment at 511–513 is G5; that stretch reads SAK.

Belongs to the TRAFAC class translation factor GTPase superfamily. Classic translation factor GTPase family. IF-2 subfamily.

The protein resides in the cytoplasm. In terms of biological role, one of the essential components for the initiation of protein synthesis. Protects formylmethionyl-tRNA from spontaneous hydrolysis and promotes its binding to the 30S ribosomal subunits. Also involved in the hydrolysis of GTP during the formation of the 70S ribosomal complex. This chain is Translation initiation factor IF-2, found in Rhodospirillum rubrum (strain ATCC 11170 / ATH 1.1.1 / DSM 467 / LMG 4362 / NCIMB 8255 / S1).